The sequence spans 149 residues: Large ribosomal subunit protein bL9 (149 aa).

It belongs to the bacterial ribosomal protein bL9 family.

Its function is as follows. Binds to the 23S rRNA. This chain is Large ribosomal subunit protein bL9, found in Salinibacter ruber (strain DSM 13855 / M31).